Reading from the N-terminus, the 261-residue chain is tRNA pseudouridine synthase A (261 aa).

D55 functions as the Nucleophile in the catalytic mechanism. Residue Y114 participates in substrate binding.

It belongs to the tRNA pseudouridine synthase TruA family. Homodimer.

The enzyme catalyses uridine(38/39/40) in tRNA = pseudouridine(38/39/40) in tRNA. Formation of pseudouridine at positions 38, 39 and 40 in the anticodon stem and loop of transfer RNAs. The protein is tRNA pseudouridine synthase A of Paracoccus denitrificans (strain Pd 1222).